Reading from the N-terminus, the 948-residue chain is UvrABC system protein A (948 aa).

31-38 (GLSGSGKS) lines the ATP pocket. The C4-type zinc-finger motif lies at 249-277 (CPNGHDIGFTELSPRMFSFNSPYGACETC). ABC transporter domains are found at residues 307 to 586 (WAGS…KNSL) and 606 to 934 (GNGS…QYLK). 638-645 (GVSGSGKS) contributes to the ATP binding site. The C4-type zinc-finger motif lies at 737-763 (CETCEGDGILKIEMHFLPDVYVTCEVC).

Belongs to the ABC transporter superfamily. UvrA family. Forms a heterotetramer with UvrB during the search for lesions.

Its subcellular location is the cytoplasm. Functionally, the UvrABC repair system catalyzes the recognition and processing of DNA lesions. UvrA is an ATPase and a DNA-binding protein. A damage recognition complex composed of 2 UvrA and 2 UvrB subunits scans DNA for abnormalities. When the presence of a lesion has been verified by UvrB, the UvrA molecules dissociate. The polypeptide is UvrABC system protein A (Leptospira interrogans serogroup Icterohaemorrhagiae serovar copenhageni (strain Fiocruz L1-130)).